We begin with the raw amino-acid sequence, 107 residues long: Vasopressin-neurophysin 2 (107 aa).

An intrachain disulfide couples Cys-1 to Cys-6. Gly-9 carries the post-translational modification Glycine amide. 7 cysteine pairs are disulfide-bonded: Cys-22–Cys-66, Cys-25–Cys-39, Cys-33–Cys-56, Cys-40–Cys-46, Cys-73–Cys-85, Cys-79–Cys-97, and Cys-86–Cys-91.

It belongs to the vasopressin/oxytocin family. As to quaternary structure, interacts with vasopressin receptors V1bR/AVPR1B (Ki=85 pM), V1aR/AVPR1A (Ki=0.6 nM) and V2R/AVPR2 (Ki=4.9 nM). Interacts with oxytocin receptor (OXTR) (Ki=110 nM).

The protein localises to the secreted. Functionally, neurophysin 2 specifically binds vasopressin. Vasopressin has a direct antidiuretic action on the kidney, it also causes vasoconstriction of the peripheral vessels. Acts by binding to vasopressin receptors (V1bR/AVPR1B, V1aR/AVPR1A, and V2R/AVPR2). This chain is Vasopressin-neurophysin 2 (AVP), found in Balaenoptera physalus (Fin whale).